A 679-amino-acid polypeptide reads, in one-letter code: Methyl-accepting chemotaxis protein McpB (679 aa).

3 divergent domain HAMP regions span residues 8–56 (AVAQ…RQLR), 63–112 (QQVE…AAHI), and 111–156 (HIAV…ERLR). The PAS domain occupies 171–213 (YNARIKSALDNVSANVMIADNDLNIIYMNRTVSEMLGRAEADI). Heme is bound at residue His234. The short motif at 285–287 (DRT) is the DxT. Important for signal propagation element. Residues 289 to 332 (EHRAEQEVSQLVQAAAAGDFSKRVEEAGKEGFFLRLAKDLNSLV) form a divergent domain HAMP 4 region. The HAMP 5 domain maps to 333-385 (DTADRGLRDVSRMLGALAQGDLTQRIEADYQGTFGQLKDFSNDTAQSLSRMLG). One can recognise a Methyl-accepting transducer domain in the interval 390–619 (AADTINTAAS…EAAAAAEAMQ (230 aa)). Disordered regions lie at residues 405-425 (NAEL…TASS) and 644-679 (ASAR…WEEF). The span at 411–425 (RTEQQASSLEETASS) shows a compositional bias: polar residues. Positions 670 to 679 (ARKEDGWEEF) are enriched in basic and acidic residues. The short motif at 675–679 (GWEEF) is the GWEEF pentapeptide. Important for methylation by CheR2 element.

This sequence belongs to the methyl-accepting chemotaxis (MCP) protein family. In terms of assembly, homodimer. The PAS domains form dimers in the presence and absence of oxygen. Interacts with the methyltransferase CheR2 via the C-terminal McpB pentapeptide GWEEF. Interacts with the methylesterase/gutaminase CheB2, which also binds to the GWEEF pentapeptide. In terms of processing, methylated by CheR2, but not by CheR1, CheR3 or WspC. Demethylated by CheB2. In vitro, can be methylated by E.coli CheR.

It localises to the cytoplasm. Chemoreceptor that plays a critical role in the virulence and pathogenesis of P.aeruginosa in a variety of hosts. Probably acts through oxygen sensing. Uses a heme-based sensor. Could be involved in chemotaxis. When expressed in E.coli, is able to sense and mediate repellent responses to oxygen, carbon monoxide and nitric oxide. The polypeptide is Methyl-accepting chemotaxis protein McpB (Pseudomonas aeruginosa (strain ATCC 15692 / DSM 22644 / CIP 104116 / JCM 14847 / LMG 12228 / 1C / PRS 101 / PAO1)).